A 215-amino-acid chain; its full sequence is MSKIYDWFEERLEIQAIADDISSKYVPPHVNIFYCLGGIVFVSFLIQVATGFAMTFYYRPTVAEAFTSVEYIMTDVNFGWLIRSIHRWSVSMMVLMMILHVFRVYLTGGFKKPRELTWVTGVILGVLTVSFGVTGYSLPWDQIGYWAVKIVTGVPDAVPVVGASIVELLRGGVSVGQGTLTRFYSLHTFVLPLLTAVFMLMHFLMIRKQGISGPL.

A helical membrane pass occupies residues 32–52; the sequence is IFYCLGGIVFVSFLIQVATGF. Residue Cys35 participates in heme c binding. His86 and His100 together coordinate heme b. 3 helical membrane passes run 90 to 110, 116 to 136, and 186 to 206; these read VSMMVLMMILHVFRVYLTGGF, LTWVTGVILGVLTVSFGVTGY, and LHTFVLPLLTAVFMLMHFLMI. Heme b contacts are provided by His187 and His202.

It belongs to the cytochrome b family. PetB subfamily. The 4 large subunits of the cytochrome b6-f complex are cytochrome b6, subunit IV (17 kDa polypeptide, PetD), cytochrome f and the Rieske protein, while the 4 small subunits are PetG, PetL, PetM and PetN. The complex functions as a dimer. Heme b serves as cofactor. It depends on heme c as a cofactor.

Its subcellular location is the plastid. The protein localises to the chloroplast thylakoid membrane. Component of the cytochrome b6-f complex, which mediates electron transfer between photosystem II (PSII) and photosystem I (PSI), cyclic electron flow around PSI, and state transitions. The polypeptide is Cytochrome b6 (Pyropia yezoensis (Susabi-nori)).